Reading from the N-terminus, the 435-residue chain is tRNA(Ile)-lysidine synthase (435 aa).

24–29 (SGGLDS) lines the ATP pocket.

This sequence belongs to the tRNA(Ile)-lysidine synthase family.

The protein resides in the cytoplasm. The catalysed reaction is cytidine(34) in tRNA(Ile2) + L-lysine + ATP = lysidine(34) in tRNA(Ile2) + AMP + diphosphate + H(+). Its function is as follows. Ligates lysine onto the cytidine present at position 34 of the AUA codon-specific tRNA(Ile) that contains the anticodon CAU, in an ATP-dependent manner. Cytidine is converted to lysidine, thus changing the amino acid specificity of the tRNA from methionine to isoleucine. In Chromobacterium violaceum (strain ATCC 12472 / DSM 30191 / JCM 1249 / CCUG 213 / NBRC 12614 / NCIMB 9131 / NCTC 9757 / MK), this protein is tRNA(Ile)-lysidine synthase.